Reading from the N-terminus, the 246-residue chain is 1-(5-phosphoribosyl)-5-[(5-phosphoribosylamino)methylideneamino] imidazole-4-carboxamide isomerase (246 aa).

Aspartate 7 acts as the Proton acceptor in catalysis. Residue aspartate 130 is the Proton donor of the active site.

It belongs to the HisA/HisF family.

It is found in the cytoplasm. It catalyses the reaction 1-(5-phospho-beta-D-ribosyl)-5-[(5-phospho-beta-D-ribosylamino)methylideneamino]imidazole-4-carboxamide = 5-[(5-phospho-1-deoxy-D-ribulos-1-ylimino)methylamino]-1-(5-phospho-beta-D-ribosyl)imidazole-4-carboxamide. The protein operates within amino-acid biosynthesis; L-histidine biosynthesis; L-histidine from 5-phospho-alpha-D-ribose 1-diphosphate: step 4/9. In Blochmanniella pennsylvanica (strain BPEN), this protein is 1-(5-phosphoribosyl)-5-[(5-phosphoribosylamino)methylideneamino] imidazole-4-carboxamide isomerase.